Here is a 191-residue protein sequence, read N- to C-terminus: Putative 3-methyladenine DNA glycosylase (191 aa).

It belongs to the DNA glycosylase MPG family.

This is Putative 3-methyladenine DNA glycosylase from Carboxydothermus hydrogenoformans (strain ATCC BAA-161 / DSM 6008 / Z-2901).